Consider the following 614-residue polypeptide: uncharacterized protein (614 aa).

The next 2 membrane-spanning stretches (helical) occupy residues 494-516 and 552-574; these read VAYW…GSTL and LLIG…IVHA. The segment at 588-614 is disordered; the sequence is AVRPRADKDIQTLTHRDEAEEDQEEDS. The segment covering 591 to 605 has biased composition (basic and acidic residues); that stretch reads PRADKDIQTLTHRDE.

It localises to the cell membrane. This is an uncharacterized protein from Treponema pallidum (strain Nichols).